The chain runs to 116 residues: uncharacterized protein (116 aa).

Positions Arg64–Arg116 are disordered. Positions Arg73–Ser87 are enriched in low complexity. Basic and acidic residues predominate over residues Arg90–Lys105.

This is an uncharacterized protein from Saccharomyces cerevisiae (strain ATCC 204508 / S288c) (Baker's yeast).